A 133-amino-acid chain; its full sequence is Large-conductance mechanosensitive channel (133 aa).

Transmembrane regions (helical) follow at residues 14 to 34 (VIDL…VSSL) and 67 to 87 (GNFI…FMFV).

Belongs to the MscL family. In terms of assembly, homopentamer.

It is found in the cell membrane. Channel that opens in response to stretch forces in the membrane lipid bilayer. May participate in the regulation of osmotic pressure changes within the cell. The polypeptide is Large-conductance mechanosensitive channel (Bacillus mycoides (strain KBAB4) (Bacillus weihenstephanensis)).